We begin with the raw amino-acid sequence, 484 residues long: Cobyric acid synthase (484 aa).

One can recognise a GATase cobBQ-type domain in the interval 249–438 (QLRVAVPVFT…LHGIFDRPET (190 aa)). Cys-330 functions as the Nucleophile in the catalytic mechanism. Residue His-430 is part of the active site.

Belongs to the CobB/CobQ family. CobQ subfamily.

It functions in the pathway cofactor biosynthesis; adenosylcobalamin biosynthesis. Functionally, catalyzes amidations at positions B, D, E, and G on adenosylcobyrinic A,C-diamide. NH(2) groups are provided by glutamine, and one molecule of ATP is hydrogenolyzed for each amidation. In Vibrio cholerae serotype O1 (strain ATCC 39541 / Classical Ogawa 395 / O395), this protein is Cobyric acid synthase.